The chain runs to 147 residues: UPF0735 ACT domain-containing protein GK2605 (147 aa).

Residues 69–144 (TLFFHLEDRS…FVEKVEIVGS (76 aa)) form the ACT domain.

This sequence belongs to the UPF0735 family.

The protein is UPF0735 ACT domain-containing protein GK2605 of Geobacillus kaustophilus (strain HTA426).